A 426-amino-acid polypeptide reads, in one-letter code: D-tagatose-1,6-bisphosphate aldolase subunit KbaZ (426 aa).

It belongs to the GatZ/KbaZ family. KbaZ subfamily. As to quaternary structure, forms a complex with KbaY.

The protein operates within carbohydrate metabolism; D-tagatose 6-phosphate degradation; D-glyceraldehyde 3-phosphate and glycerone phosphate from D-tagatose 6-phosphate: step 2/2. In terms of biological role, component of the tagatose-1,6-bisphosphate aldolase KbaYZ that is required for full activity and stability of the Y subunit. Could have a chaperone-like function for the proper and stable folding of KbaY. When expressed alone, KbaZ does not show any aldolase activity. The sequence is that of D-tagatose-1,6-bisphosphate aldolase subunit KbaZ from Escherichia coli O81 (strain ED1a).